The chain runs to 429 residues: Gamma-glutamyl phosphate reductase (429 aa).

This sequence belongs to the gamma-glutamyl phosphate reductase family.

The protein resides in the cytoplasm. The enzyme catalyses L-glutamate 5-semialdehyde + phosphate + NADP(+) = L-glutamyl 5-phosphate + NADPH + H(+). Its pathway is amino-acid biosynthesis; L-proline biosynthesis; L-glutamate 5-semialdehyde from L-glutamate: step 2/2. Its function is as follows. Catalyzes the NADPH-dependent reduction of L-glutamate 5-phosphate into L-glutamate 5-semialdehyde and phosphate. The product spontaneously undergoes cyclization to form 1-pyrroline-5-carboxylate. This chain is Gamma-glutamyl phosphate reductase, found in Bradyrhizobium sp. (strain BTAi1 / ATCC BAA-1182).